Consider the following 271-residue polypeptide: Ribonuclease HII (271 aa).

In terms of domain architecture, RNase H type-2 spans 84–271 (VLIAGVDEVG…HRMSFLSNYI (188 aa)). The a divalent metal cation site is built by Asp-90, Glu-91, and Asp-187.

This sequence belongs to the RNase HII family. Mn(2+) serves as cofactor. Mg(2+) is required as a cofactor.

It is found in the cytoplasm. It carries out the reaction Endonucleolytic cleavage to 5'-phosphomonoester.. Its function is as follows. Endonuclease that specifically degrades the RNA of RNA-DNA hybrids. The sequence is that of Ribonuclease HII from Clostridium tetani (strain Massachusetts / E88).